Reading from the N-terminus, the 404-residue chain is Phosphopentomutase (404 aa).

Mn(2+) contacts are provided by aspartate 10, aspartate 303, histidine 308, aspartate 344, histidine 345, and histidine 356.

The protein belongs to the phosphopentomutase family. The cofactor is Mn(2+).

It is found in the cytoplasm. The catalysed reaction is 2-deoxy-alpha-D-ribose 1-phosphate = 2-deoxy-D-ribose 5-phosphate. It catalyses the reaction alpha-D-ribose 1-phosphate = D-ribose 5-phosphate. It participates in carbohydrate degradation; 2-deoxy-D-ribose 1-phosphate degradation; D-glyceraldehyde 3-phosphate and acetaldehyde from 2-deoxy-alpha-D-ribose 1-phosphate: step 1/2. Its function is as follows. Isomerase that catalyzes the conversion of deoxy-ribose 1-phosphate (dRib-1-P) and ribose 1-phosphate (Rib-1-P) to deoxy-ribose 5-phosphate (dRib-5-P) and ribose 5-phosphate (Rib-5-P), respectively. The protein is Phosphopentomutase of Shewanella sp. (strain ANA-3).